The following is a 180-amino-acid chain: NADH-quinone oxidoreductase subunit I (180 aa).

2 consecutive 4Fe-4S ferredoxin-type domains span residues 50–80 and 90–119; these read LTRNIDGQERCVACNLCAVVCPVDCISLQKS and KFFRINFSRCIFCGLCEEACPTAAIQLMPD. Positions 60, 63, 66, 70, 99, 102, 105, and 109 each coordinate [4Fe-4S] cluster.

The protein belongs to the complex I 23 kDa subunit family. In terms of assembly, NDH-1 is composed of 13 different subunits. Subunits NuoA, H, J, K, L, M, N constitute the membrane sector of the complex. Requires [4Fe-4S] cluster as cofactor.

It localises to the cell membrane. It catalyses the reaction a quinone + NADH + 5 H(+)(in) = a quinol + NAD(+) + 4 H(+)(out). In terms of biological role, NDH-1 shuttles electrons from NADH, via FMN and iron-sulfur (Fe-S) centers, to quinones in the respiratory chain. The immediate electron acceptor for the enzyme in this species is believed to be ubiquinone. Couples the redox reaction to proton translocation (for every two electrons transferred, four hydrogen ions are translocated across the cytoplasmic membrane), and thus conserves the redox energy in a proton gradient. In Buchnera aphidicola subsp. Acyrthosiphon pisum (strain APS) (Acyrthosiphon pisum symbiotic bacterium), this protein is NADH-quinone oxidoreductase subunit I.